We begin with the raw amino-acid sequence, 981 residues long: Translation initiation factor IF-2 (981 aa).

The tract at residues 31–370 (FVKSASSTVE…SKRAKRAEYE (340 aa)) is disordered. Over residues 64-87 (GAAAPAARPAAKPGAPSPSAAKPG) the composition is skewed to low complexity. Pro residues predominate over residues 88-111 (GPRPGPKPAAPAPAAPAAPAPAAP). The span at 112 to 121 (AAPAAAAPAA) shows a compositional bias: low complexity. Over residues 136-145 (PAQPARPAPA) the composition is skewed to pro residues. Low complexity predominate over residues 146-165 (APAASAPAAPAAPAAPSTGA). A compositionally biased stretch (pro residues) spans 256–269 (RPSPGSMPPRPNPG). Positions 270–279 (AMPARSARPA) are enriched in low complexity. Positions 280-339 (PGGGGRPGRPGGAPGGRPGGGGGGYRGGGAPGAGAGAGAPGGAAPAGGFRGRPGGGGRPG) are enriched in gly residues. The segment covering 356–365 (RRGRKSKRAK) has biased composition (basic residues). The tr-type G domain occupies 477-649 (SRPPVVTVMG…VLLTADASLD (173 aa)). The interval 486 to 493 (GHVDHGKT) is G1. Position 486–493 (486–493 (GHVDHGKT)) interacts with GTP. Residues 511-515 (GITQH) are G2. The G3 stretch occupies residues 536–539 (DTPG). Residues 536 to 540 (DTPGH) and 590 to 593 (NKID) each bind GTP. The tract at residues 590–593 (NKID) is G4. Positions 626-628 (SAK) are G5.

Belongs to the TRAFAC class translation factor GTPase superfamily. Classic translation factor GTPase family. IF-2 subfamily.

It localises to the cytoplasm. In terms of biological role, one of the essential components for the initiation of protein synthesis. Protects formylmethionyl-tRNA from spontaneous hydrolysis and promotes its binding to the 30S ribosomal subunits. Also involved in the hydrolysis of GTP during the formation of the 70S ribosomal complex. The chain is Translation initiation factor IF-2 from Rhodococcus erythropolis (strain PR4 / NBRC 100887).